Here is a 420-residue protein sequence, read N- to C-terminus: Tyrosine--tRNA ligase (420 aa).

Tyr33 lines the L-tyrosine pocket. The 'HIGH' region signature appears at 38 to 47 (PTADSLHVGH). Positions 167 and 171 each coordinate L-tyrosine. The 'KMSKS' region signature appears at 227–231 (KFGKT). Lys230 contributes to the ATP binding site. Positions 353-419 (LTVADLLVKV…GKRNYALVKV (67 aa)) constitute an S4 RNA-binding domain.

Belongs to the class-I aminoacyl-tRNA synthetase family. TyrS type 1 subfamily. In terms of assembly, homodimer.

The protein localises to the cytoplasm. The enzyme catalyses tRNA(Tyr) + L-tyrosine + ATP = L-tyrosyl-tRNA(Tyr) + AMP + diphosphate + H(+). In terms of biological role, catalyzes the attachment of tyrosine to tRNA(Tyr) in a two-step reaction: tyrosine is first activated by ATP to form Tyr-AMP and then transferred to the acceptor end of tRNA(Tyr). This Anaeromyxobacter dehalogenans (strain 2CP-C) protein is Tyrosine--tRNA ligase.